A 148-amino-acid chain; its full sequence is UPF0179 protein Mpal_0949 (148 aa).

This sequence belongs to the UPF0179 family.

This is UPF0179 protein Mpal_0949 from Methanosphaerula palustris (strain ATCC BAA-1556 / DSM 19958 / E1-9c).